The chain runs to 1081 residues: uncharacterized protein (1081 aa).

2 coiled-coil regions span residues 18–131 and 173–242; these read AIEE…FEEN and NHDE…NDDK. Basic and acidic residues predominate over residues 22 to 53; that stretch reads NNKNREIQEKRQKETKDRNDRMVQNQKDRKEM. Positions 22-60 are disordered; sequence NNKNREIQEKRQKETKDRNDRMVQNQKDRKEMIGLTNEK. Disordered stretches follow at residues 250-321 and 388-1081; these read TDDE…KPGI and QEPK…GNDE. Residues 267–283 are compositionally biased toward pro residues; it reads TPTPTPTPTPTPTPTPT. 2 stretches are compositionally biased toward low complexity: residues 284-313 and 396-410; these read PTTT…KTST and NNQS…QAGD. The segment covering 411 to 421 has biased composition (basic and acidic residues); it reads DQNKNQNRDEN. Composition is skewed to low complexity over residues 422 to 568, 576 to 602, 614 to 623, 633 to 644, 662 to 672, and 680 to 733; these read NQGG…NNQE, NQDG…GGEN, GENNQDGGEN, DGENNQDGGENN, GENNQDGGENN, and QDGG…NNQD. Acidic residues-rich tracts occupy residues 748–768, 778–832, and 840–854; these read GGED…DNQD, NNQD…DENN, and QDGD…DENN. 2 stretches are compositionally biased toward low complexity: residues 855–869 and 877–888; these read NQDG…GENN and NQDGGENNQDGE. Residues 889–954 show a composition bias toward acidic residues; the sequence is NNQDGDENNN…GDENNQDGDE (66 aa). Composition is skewed to low complexity over residues 955 to 975, 983 to 1026, and 1034 to 1081; these read NNQG…GGDE, ENNQ…GGDE, and GENN…GNDE.

This is an uncharacterized protein from Dictyostelium discoideum (Social amoeba).